The sequence spans 200 residues: Ependymin-related protein 1 (200 aa).

An N-terminal signal peptide occupies residues 1–17 (MILQAALFLAGLTVVSG). Residues Asn-36, Asn-124, and Asn-136 are each glycosylated (N-linked (GlcNAc...) asparagine).

Belongs to the ependymin family. As to expression, component of the acid-soluble and acid-insoluble organic matrix of prismatic shell layers (at protein level). Expressed discontinuously in the anterior zone of the outer fold of the mantle where its expression correlates with shell pigmentation.

It localises to the secreted. This chain is Ependymin-related protein 1, found in Haliotis asinina (Donkey's ear abalone).